The following is a 389-amino-acid chain: Succinate--CoA ligase [ADP-forming] subunit beta (389 aa).

ATP contacts are provided by residues Lys46, 53 to 55 (GRG), Glu99, Cys102, and Glu107. Residues Asn199 and Asp213 each coordinate Mg(2+). Substrate-binding positions include Asn264 and 321 to 323 (GIV).

It belongs to the succinate/malate CoA ligase beta subunit family. Heterotetramer of two alpha and two beta subunits. It depends on Mg(2+) as a cofactor.

It catalyses the reaction succinate + ATP + CoA = succinyl-CoA + ADP + phosphate. The catalysed reaction is GTP + succinate + CoA = succinyl-CoA + GDP + phosphate. It participates in carbohydrate metabolism; tricarboxylic acid cycle; succinate from succinyl-CoA (ligase route): step 1/1. Succinyl-CoA synthetase functions in the citric acid cycle (TCA), coupling the hydrolysis of succinyl-CoA to the synthesis of either ATP or GTP and thus represents the only step of substrate-level phosphorylation in the TCA. The beta subunit provides nucleotide specificity of the enzyme and binds the substrate succinate, while the binding sites for coenzyme A and phosphate are found in the alpha subunit. The protein is Succinate--CoA ligase [ADP-forming] subunit beta of Haemophilus influenzae (strain 86-028NP).